The following is a 149-amino-acid chain: FAD synthase (149 aa).

Residues 9–10, 14–17, Asp-93, and Tyr-120 contribute to the ATP site; these read VF and HPGH.

The protein belongs to the archaeal FAD synthase family. In terms of assembly, homodimer. Requires a divalent metal cation as cofactor.

It catalyses the reaction FMN + ATP + H(+) = FAD + diphosphate. It functions in the pathway cofactor biosynthesis; FAD biosynthesis; FAD from FMN: step 1/1. Its function is as follows. Catalyzes the transfer of the AMP portion of ATP to flavin mononucleotide (FMN) to produce flavin adenine dinucleotide (FAD) coenzyme. The chain is FAD synthase from Aciduliprofundum boonei (strain DSM 19572 / T469).